We begin with the raw amino-acid sequence, 3125 residues long: Genome polyprotein (3125 aa).

One can recognise a Peptidase S30 domain in the interval 165–308; it reads RMSEASLQLF…KKQSNEIIHY (144 aa). Active-site for P1 proteinase activity residues include His-216, Asp-225, and Ser-259. The Involved in interaction with stylet and aphid transmission motif lies at 360–363; it reads KITC. The Involved in virions binding and aphid transmission motif lies at 618–620; the sequence is PTK. The region spanning 644–766 is the Peptidase C6 domain; sequence MFIAKAGYCY…DSNMKTYLVG (123 aa). Catalysis depends on for helper component proteinase activity residues Cys-652 and His-725. One can recognise a Helicase ATP-binding domain in the interval 1240–1392; sequence EVMHGSHQDI…TQKEVKVIVE (153 aa). 1253 to 1260 provides a ligand contact to ATP; it reads GAVGSGKS. Positions 1342 to 1345 match the DECH box motif; sequence DECH. The Helicase C-terminal domain maps to 1411-1570; that stretch reads DILKHGVNVL…GLPVMTNGVS (160 aa). The Nuclear localization signal signature appears at 1897–1904; it reads KKGKSKGK. Tyr-1919 is modified (O-(5'-phospho-RNA)-tyrosine). The Peptidase C4 domain occupies 2050–2268; sequence SKSLFRGLRD…VCWGSLQLKR (219 aa). Active-site for nuclear inclusion protein A activity residues include His-2095, Asp-2130, and Cys-2200. The RdRp catalytic domain occupies 2534–2658; the sequence is WIYCDADGSQ…AVHPAYESIY (125 aa). The interval 2869–2897 is disordered; it reads TYSHEDASPSNSNALVNTNRDRDVDAGST. 3 positions are modified to phosphoserine: Ser-2876, Ser-2896, and Ser-2913. Residues 2876 to 2886 are compositionally biased toward polar residues; the sequence is SPSNSNALVNT. Thr-3049 and Thr-3108 each carry phosphothreonine.

The protein belongs to the potyviridae genome polyprotein family. As to quaternary structure, interacts with host eIF4E protein (via cap-binding region); this interaction mediates the translation of the VPg-viral RNA conjugates. Part of a complex that comprises VPg, RNA, host EIF4E and EIF4G; this interaction mediates the translation of the VPg-viral RNA conjugates. Post-translationally, VPg is uridylylated by the polymerase and is covalently attached to the 5'-end of the genomic RNA. This uridylylated form acts as a nucleotide-peptide primer for the polymerase. In terms of processing, potyviral RNA is expressed as two polyproteins which undergo post-translational proteolytic processing. Genome polyprotein is processed by NIa-pro, P1 and HC-pro proteinases resulting in the production of at least ten individual proteins. P3N-PIPO polyprotein is cleaved by P1 and HC-pro proteinases resulting in the production of three individual proteins. The P1 proteinase and the HC-pro cleave only their respective C-termini autocatalytically. 6K1 is essential for proper proteolytic separation of P3 from CI.

The protein resides in the host cytoplasmic vesicle. Its subcellular location is the host nucleus. The protein localises to the virion. It carries out the reaction RNA(n) + a ribonucleoside 5'-triphosphate = RNA(n+1) + diphosphate. The enzyme catalyses Hydrolyzes glutaminyl bonds, and activity is further restricted by preferences for the amino acids in P6 - P1' that vary with the species of potyvirus, e.g. Glu-Xaa-Xaa-Tyr-Xaa-Gln-|-(Ser or Gly) for the enzyme from tobacco etch virus. The natural substrate is the viral polyprotein, but other proteins and oligopeptides containing the appropriate consensus sequence are also cleaved.. The catalysed reaction is Hydrolyzes a Gly-|-Gly bond at its own C-terminus, commonly in the sequence -Tyr-Xaa-Val-Gly-|-Gly, in the processing of the potyviral polyprotein.. In terms of biological role, required for aphid transmission and also has proteolytic activity. Only cleaves a Gly-Gly dipeptide at its own C-terminus. Interacts with virions and aphid stylets. Acts as a suppressor of RNA-mediated gene silencing, also known as post-transcriptional gene silencing (PTGS), a mechanism of plant viral defense that limits the accumulation of viral RNAs. May have RNA-binding activity. Its function is as follows. Has helicase activity. It may be involved in replication. Indispensable for virus replication. Reduces the abundance of host transcripts related to jasmonic acid biosynthesis therefore altering the host defenses. In order to increase its own stability, decreases host protein degradation pathways. Functionally, indispensable for virus replication. In terms of biological role, mediates the cap-independent, EIF4E-dependent translation of viral genomic RNAs. Binds to the cap-binding site of host EIF4E and thus interferes with the host EIF4E-dependent mRNA export and translation. VPg-RNA directly binds EIF4E and is a template for transcription. Also forms trimeric complexes with EIF4E-EIF4G, which are templates for translation. Its function is as follows. Has RNA-binding and proteolytic activities. An RNA-dependent RNA polymerase that plays an essential role in the virus replication. Functionally, involved in aphid transmission, cell-to-cell and systemis movement, encapsidation of the viral RNA and in the regulation of viral RNA amplification. The chain is Genome polyprotein from Plum pox potyvirus (isolate NAT) (PPV).